The chain runs to 340 residues: Mitochondrial carrier protein CoAc1 (340 aa).

The next 6 helical transmembrane spans lie at Ala-22–Phe-42, Phe-85–Met-105, Leu-130–Leu-147, Gly-199–Glu-219, Leu-237–Val-257, and Phe-297–Thr-317. 3 Solcar repeats span residues Pro-27 to Trp-113, Thr-124 to Gln-224, and Asp-231 to Leu-324.

It belongs to the mitochondrial carrier (TC 2.A.29) family. Expressed throughout the plant.

Its subcellular location is the mitochondrion inner membrane. Required for the accumulation of coenzyme A in the mitochondrial matrix. The polypeptide is Mitochondrial carrier protein CoAc1 (Zea mays (Maize)).